We begin with the raw amino-acid sequence, 735 residues long: Disintegrin and metalloproteinase domain-containing protein 2 (735 aa).

The N-terminal stretch at 1-15 is a signal peptide; sequence MLCLLLLLCGLASLG. Residues 16–176 constitute a propeptide that is removed on maturation; sequence GPLKKYVENS…KIKSIKSSVR (161 aa). Residues 16–680 lie on the Extracellular side of the membrane; it reads GPLKKYVENS…EGAYHTKSRK (665 aa). N-linked (GlcNAc...) asparagine glycans are attached at residues Asn-55, Asn-220, and Asn-288. One can recognise a Peptidase M12B domain in the interval 178 to 375; the sequence is HYIEMHIIVE…QVSQCLQNQP (198 aa). Cystine bridges form between Cys-287-Cys-370, Cys-329-Cys-354, Cys-331-Cys-336, and Cys-442-Cys-455. Asn-353 is a glycosylation site (N-linked (GlcNAc...) asparagine). In terms of domain architecture, Disintegrin spans 384–470; that stretch reads NPVCGNNRVE…ACQEDLYVIN (87 aa). N-linked (GlcNAc...) asparagine glycosylation is found at Asn-456 and Asn-564. Residues 610–643 form the EGF-like domain; sequence LGYDCTPATCSDHGVCNNKRHCHCNPTYVPPNCE. 3 disulfides stabilise this stretch: Cys-614-Cys-625, Cys-619-Cys-631, and Cys-633-Cys-642. A helical membrane pass occupies residues 681-701; the sequence is WPFFLIIPFFVIFSVLVATVV. Over 702-735 the chain is Cytoplasmic; it reads KVYYQKKKWKTEDYANDENIESESEPKSSKVSSK. Residues 716-735 form a disordered region; sequence ANDENIESESEPKSSKVSSK. Ser-723 carries the post-translational modification Phosphoserine.

Heterodimer with ADAM1/fertilin subunit alpha. The signal and the metalloprotease domain are cleaved during the epididymal maturation of the spermatozoa. As to expression, expressed specifically in testis.

The protein localises to the membrane. Functionally, sperm surface membrane protein that may be involved in sperm-egg plasma membrane adhesion and fusion during fertilization. Could have a direct role in sperm-zona binding or migration of sperm from the uterus into the oviduct. Interactions with egg membrane could be mediated via binding between its disintegrin-like domain to one or more integrins receptors on the egg. This is a non catalytic metalloprotease-like protein. The chain is Disintegrin and metalloproteinase domain-containing protein 2 (ADAM2) from Cavia porcellus (Guinea pig).